The chain runs to 97 residues: Large ribosomal subunit protein uL23 (97 aa).

The protein belongs to the universal ribosomal protein uL23 family. Part of the 50S ribosomal subunit. Contacts protein L29, and trigger factor when it is bound to the ribosome.

One of the early assembly proteins it binds 23S rRNA. One of the proteins that surrounds the polypeptide exit tunnel on the outside of the ribosome. Forms the main docking site for trigger factor binding to the ribosome. The protein is Large ribosomal subunit protein uL23 of Mesorhizobium japonicum (strain LMG 29417 / CECT 9101 / MAFF 303099) (Mesorhizobium loti (strain MAFF 303099)).